The following is a 335-amino-acid chain: SAM pointed domain-containing Ets transcription factor (335 aa).

Positions 1–20 (MGSASPGLSSVSPSHLLLPP) are enriched in low complexity. Disordered regions lie at residues 1–25 (MGSA…TVSR) and 75–100 (AKAP…DSQA). Positions 129-213 (EVLKDIETAC…AHLDIWKSAA (85 aa)) constitute a PNT domain. Residues 249–332 (IHLWQFLKEL…ISQRLVYQFV (84 aa)) constitute a DNA-binding region (ETS).

It belongs to the ETS family. In terms of assembly, interacts with the DNA-binding domain of the androgen receptor. Interacts with NKX3-1. Expressed in a very restricted set of primarily hormone-regulated epithelial tissues with particularly high expression in the prostate gland. Significantly lower expression is seen in other hormone regulated tissues such as mammary gland, salivary gland, and ovary. Expressed in prostate carcinoma cells.

It localises to the nucleus. Functionally, may function as an androgen-independent transactivator of the prostate-specific antigen (PSA) promoter. Binds to 5'-GGAT-3' DNA sequences. May play a role in the regulation of the prostate gland and/or prostate cancer development. Acts as a transcriptional activator for SERPINB5 promoter. The polypeptide is SAM pointed domain-containing Ets transcription factor (SPDEF) (Homo sapiens (Human)).